The chain runs to 500 residues: Glycerol kinase (500 aa).

Residue Thr-13 participates in ADP binding. Positions 13, 14, and 15 each coordinate ATP. Thr-13 serves as a coordination point for sn-glycerol 3-phosphate. Arg-17 provides a ligand contact to ADP. The sn-glycerol 3-phosphate site is built by Arg-83, Glu-84, Tyr-135, and Asp-244. Glycerol is bound by residues Arg-83, Glu-84, Tyr-135, Asp-244, and Gln-245. ADP-binding residues include Thr-266 and Gly-309. Thr-266, Gly-309, Gln-313, and Gly-410 together coordinate ATP. Gly-410 and Asn-414 together coordinate ADP.

It belongs to the FGGY kinase family.

The enzyme catalyses glycerol + ATP = sn-glycerol 3-phosphate + ADP + H(+). Its pathway is polyol metabolism; glycerol degradation via glycerol kinase pathway; sn-glycerol 3-phosphate from glycerol: step 1/1. With respect to regulation, inhibited by fructose 1,6-bisphosphate (FBP). Functionally, key enzyme in the regulation of glycerol uptake and metabolism. Catalyzes the phosphorylation of glycerol to yield sn-glycerol 3-phosphate. In Burkholderia cenocepacia (strain HI2424), this protein is Glycerol kinase.